A 420-amino-acid polypeptide reads, in one-letter code: Xyloglucan O-acetyltransferase 4 (420 aa).

At 1–30 (MTMHEKMKLPSCSCSAFKCGKKDRWLNMER) the chain is on the cytoplasmic side. The helical; Signal-anchor for type II membrane protein transmembrane segment at 31 to 51 (PIPFLLIGLTTILSVFILYTL) threads the bilayer. Over 52-420 (NPLKFVIEHN…LLLAVLRRLD (369 aa)) the chain is Lumenal. Intrachain disulfides connect cysteine 78–cysteine 128, cysteine 99–cysteine 164, cysteine 108–cysteine 400, and cysteine 323–cysteine 396. Asparagine 96 is a glycosylation site (N-linked (GlcNAc...) asparagine). The GDS motif signature appears at 151-153 (GDS). The active-site Nucleophile is serine 153. N-linked (GlcNAc...) asparagine glycosylation is found at asparagine 192, asparagine 212, asparagine 270, and asparagine 324. Aspartate 395 functions as the Proton donor in the catalytic mechanism. The short motif at 395–398 (DCVH) is the DXXH motif element. Histidine 398 acts as the Proton acceptor in catalysis.

This sequence belongs to the PC-esterase family. TBL subfamily.

It is found in the golgi apparatus membrane. Its function is as follows. Xyloglucan acetyltransferase that catalyzes the acetylation of fucosylated Gal residues on xyloglucan side chains. Predominantly catalyze 6-O-monoacetylation of Gal residues in the Fuc-Gal-Xyl trisaccharide side chains of xyloglucan oligomers. In Populus trichocarpa (Western balsam poplar), this protein is Xyloglucan O-acetyltransferase 4.